We begin with the raw amino-acid sequence, 399 residues long: Chorismate synthase (399 aa).

Residues 41-72 (IQKDLDRRKPGQSMITTSRGEPDKVTINSGIQ) are disordered. R48 serves as a coordination point for NADP(+). Residues 125 to 127 (RSS), G288, 303 to 307 (HAPVS), and R330 contribute to the FMN site. 2 stretches are compositionally biased toward basic and acidic residues: residues 363–377 (PDRLDGRPGEYDTDY) and 389–399 (ADTHAKTIDDD). Residues 363 to 399 (PDRLDGRPGEYDTDYHPSSPQNDPEDADTHAKTIDDD) form a disordered region.

This sequence belongs to the chorismate synthase family. Requires FMNH2 as cofactor.

The catalysed reaction is 5-O-(1-carboxyvinyl)-3-phosphoshikimate = chorismate + phosphate. The protein operates within metabolic intermediate biosynthesis; chorismate biosynthesis; chorismate from D-erythrose 4-phosphate and phosphoenolpyruvate: step 7/7. Functionally, catalyzes the anti-1,4-elimination of the C-3 phosphate and the C-6 proR hydrogen from 5-enolpyruvylshikimate-3-phosphate (EPSP) to yield chorismate, which is the branch point compound that serves as the starting substrate for the three terminal pathways of aromatic amino acid biosynthesis. This reaction introduces a second double bond into the aromatic ring system. The chain is Chorismate synthase from Haloarcula marismortui (strain ATCC 43049 / DSM 3752 / JCM 8966 / VKM B-1809) (Halobacterium marismortui).